A 373-amino-acid polypeptide reads, in one-letter code: Phosphoserine aminotransferase (373 aa).

R46 contributes to the L-glutamate binding site. 4 residues coordinate pyridoxal 5'-phosphate: F104, T150, D172, and Q195. K196 bears the N6-(pyridoxal phosphate)lysine mark. 247 to 248 (NT) serves as a coordination point for pyridoxal 5'-phosphate.

The protein belongs to the class-V pyridoxal-phosphate-dependent aminotransferase family. SerC subfamily. As to quaternary structure, homodimer. Pyridoxal 5'-phosphate serves as cofactor.

It is found in the cytoplasm. It carries out the reaction O-phospho-L-serine + 2-oxoglutarate = 3-phosphooxypyruvate + L-glutamate. It catalyses the reaction 4-(phosphooxy)-L-threonine + 2-oxoglutarate = (R)-3-hydroxy-2-oxo-4-phosphooxybutanoate + L-glutamate. It participates in amino-acid biosynthesis; L-serine biosynthesis; L-serine from 3-phospho-D-glycerate: step 2/3. It functions in the pathway cofactor biosynthesis; pyridoxine 5'-phosphate biosynthesis; pyridoxine 5'-phosphate from D-erythrose 4-phosphate: step 3/5. Catalyzes the reversible conversion of 3-phosphohydroxypyruvate to phosphoserine and of 3-hydroxy-2-oxo-4-phosphonooxybutanoate to phosphohydroxythreonine. The chain is Phosphoserine aminotransferase from Rhodococcus jostii (strain RHA1).